Reading from the N-terminus, the 347-residue chain is MSDERVVTPRAGEEDQQIEKSLRPRRLAEFIGQEKVVEQLRIAIAAAKGRGEPLDHTLLYGPPGLGKTSLAGVLANEMEVNIKLTSGPAIERAGDLAALLTNLQKDDILFIDEIHRLNRAIEEVLYPAMEDFALDIMVGKGPGARSLRLKLPRFTVVGATTRLALLTSPLRDRFGSVHRLEFYSVDALYEIVMRSARILGVVCTPEGAREIAARARGTPRIVNRLLRRVRDYAQVIGDGIITLDVARDALAKLEVDHLGLDENDRRLLRAIIDLFGGGPVGLSTLAASLAEEVDAIEDVYEPFLLQLGFLQRTPRGRIATRRAYEHLGVPYVERSVDNGAEQGRLWT.

Residues 1–183 (MSDERVVTPR…FGSVHRLEFY (183 aa)) form a large ATPase domain (RuvB-L) region. ATP is bound by residues L22, R23, G64, K67, T68, S69, 130–132 (EDF), R173, Y183, and R220. T68 contacts Mg(2+). The tract at residues 184-254 (SVDALYEIVM…VARDALAKLE (71 aa)) is small ATPAse domain (RuvB-S). The tract at residues 257-347 (HLGLDENDRR…NGAEQGRLWT (91 aa)) is head domain (RuvB-H). Residues R312 and R317 each coordinate DNA.

This sequence belongs to the RuvB family. In terms of assembly, homohexamer. Forms an RuvA(8)-RuvB(12)-Holliday junction (HJ) complex. HJ DNA is sandwiched between 2 RuvA tetramers; dsDNA enters through RuvA and exits via RuvB. An RuvB hexamer assembles on each DNA strand where it exits the tetramer. Each RuvB hexamer is contacted by two RuvA subunits (via domain III) on 2 adjacent RuvB subunits; this complex drives branch migration. In the full resolvosome a probable DNA-RuvA(4)-RuvB(12)-RuvC(2) complex forms which resolves the HJ.

It localises to the cytoplasm. The enzyme catalyses ATP + H2O = ADP + phosphate + H(+). Its function is as follows. The RuvA-RuvB-RuvC complex processes Holliday junction (HJ) DNA during genetic recombination and DNA repair, while the RuvA-RuvB complex plays an important role in the rescue of blocked DNA replication forks via replication fork reversal (RFR). RuvA specifically binds to HJ cruciform DNA, conferring on it an open structure. The RuvB hexamer acts as an ATP-dependent pump, pulling dsDNA into and through the RuvAB complex. RuvB forms 2 homohexamers on either side of HJ DNA bound by 1 or 2 RuvA tetramers; 4 subunits per hexamer contact DNA at a time. Coordinated motions by a converter formed by DNA-disengaged RuvB subunits stimulates ATP hydrolysis and nucleotide exchange. Immobilization of the converter enables RuvB to convert the ATP-contained energy into a lever motion, pulling 2 nucleotides of DNA out of the RuvA tetramer per ATP hydrolyzed, thus driving DNA branch migration. The RuvB motors rotate together with the DNA substrate, which together with the progressing nucleotide cycle form the mechanistic basis for DNA recombination by continuous HJ branch migration. Branch migration allows RuvC to scan DNA until it finds its consensus sequence, where it cleaves and resolves cruciform DNA. The sequence is that of Holliday junction branch migration complex subunit RuvB from Roseiflexus castenholzii (strain DSM 13941 / HLO8).